A 281-amino-acid polypeptide reads, in one-letter code: MEMO1 family protein Pars_0062 (281 aa).

It belongs to the MEMO1 family.

The protein is MEMO1 family protein Pars_0062 of Pyrobaculum arsenaticum (strain DSM 13514 / JCM 11321 / PZ6).